Consider the following 580-residue polypeptide: NADH-ubiquinone oxidoreductase chain 5 (580 aa).

16 helical membrane passes run 12-32 (FYFL…FLLM), 50-70 (IVMT…VLLI), 92-112 (ILLV…PNLI), 113-133 (SILL…IYFQ), 153-173 (VALL…YIFY), 183-203 (MMII…QIPF), 215-235 (TPVS…YLLI), 244-264 (WWMA…AGLG), 274-293 (IIAL…LSMG), 298-320 (AFFH…GSII), 343-363 (CSCF…AGFY), 367-387 (LILE…LFFF), 427-447 (ICFL…LMFL), 463-483 (LFVC…KLFF), 496-516 (FVGS…NYPL), and 560-580 (IYLL…VLVN).

The protein belongs to the complex I subunit 5 family.

The protein localises to the mitochondrion inner membrane. It catalyses the reaction a ubiquinone + NADH + 5 H(+)(in) = a ubiquinol + NAD(+) + 4 H(+)(out). Its function is as follows. Core subunit of the mitochondrial membrane respiratory chain NADH dehydrogenase (Complex I) that is believed to belong to the minimal assembly required for catalysis. Complex I functions in the transfer of electrons from NADH to the respiratory chain. The immediate electron acceptor for the enzyme is believed to be ubiquinone. This chain is NADH-ubiquinone oxidoreductase chain 5 (mt:ND5), found in Anopheles gambiae (African malaria mosquito).